A 237-amino-acid polypeptide reads, in one-letter code: Sugar fermentation stimulation protein homolog (237 aa).

The protein belongs to the SfsA family.

The chain is Sugar fermentation stimulation protein homolog from Pseudomonas putida (strain W619).